We begin with the raw amino-acid sequence, 499 residues long: Maturase K (499 aa).

It belongs to the intron maturase 2 family. MatK subfamily.

It is found in the plastid. It localises to the chloroplast. In terms of biological role, usually encoded in the trnK tRNA gene intron. Probably assists in splicing its own and other chloroplast group II introns. This is Maturase K from Ceratonia siliqua (Carob).